A 444-amino-acid polypeptide reads, in one-letter code: Signal recognition particle 54 kDa protein (444 aa).

GTP is bound by residues 102–109, 184–188, and 244–247; these read GVQGSGKT, DTAGR, and SKMD.

The protein belongs to the GTP-binding SRP family. SRP54 subfamily. Part of the signal recognition particle protein translocation system, which is composed of SRP and FtsY. Archaeal SRP consists of a 7S RNA molecule of 300 nucleotides and two protein subunits: SRP54 and SRP19.

The protein resides in the cytoplasm. The catalysed reaction is GTP + H2O = GDP + phosphate + H(+). Involved in targeting and insertion of nascent membrane proteins into the cytoplasmic membrane. Binds to the hydrophobic signal sequence of the ribosome-nascent chain (RNC) as it emerges from the ribosomes. The SRP-RNC complex is then targeted to the cytoplasmic membrane where it interacts with the SRP receptor FtsY. The sequence is that of Signal recognition particle 54 kDa protein from Sulfolobus acidocaldarius (strain ATCC 33909 / DSM 639 / JCM 8929 / NBRC 15157 / NCIMB 11770).